The chain runs to 313 residues: Ribosomal RNA small subunit methyltransferase H (313 aa).

S-adenosyl-L-methionine-binding positions include 35–37 (GGH), Asp-55, Phe-80, Asp-102, and Gln-109.

The protein belongs to the methyltransferase superfamily. RsmH family.

Its subcellular location is the cytoplasm. It carries out the reaction cytidine(1402) in 16S rRNA + S-adenosyl-L-methionine = N(4)-methylcytidine(1402) in 16S rRNA + S-adenosyl-L-homocysteine + H(+). In terms of biological role, specifically methylates the N4 position of cytidine in position 1402 (C1402) of 16S rRNA. This Shewanella sp. (strain MR-7) protein is Ribosomal RNA small subunit methyltransferase H.